We begin with the raw amino-acid sequence, 211 residues long: Thiamine-phosphate synthase (211 aa).

4-amino-2-methyl-5-(diphosphooxymethyl)pyrimidine is bound by residues 37–41 (QLRIK) and asparagine 69. Mg(2+) is bound by residues aspartate 70 and aspartate 89. Serine 108 contributes to the 4-amino-2-methyl-5-(diphosphooxymethyl)pyrimidine binding site. 134–136 (TQT) is a 2-[(2R,5Z)-2-carboxy-4-methylthiazol-5(2H)-ylidene]ethyl phosphate binding site. 4-amino-2-methyl-5-(diphosphooxymethyl)pyrimidine is bound at residue lysine 137. Residues glycine 166 and 186–187 (VS) contribute to the 2-[(2R,5Z)-2-carboxy-4-methylthiazol-5(2H)-ylidene]ethyl phosphate site.

Belongs to the thiamine-phosphate synthase family. Mg(2+) is required as a cofactor.

The enzyme catalyses 2-[(2R,5Z)-2-carboxy-4-methylthiazol-5(2H)-ylidene]ethyl phosphate + 4-amino-2-methyl-5-(diphosphooxymethyl)pyrimidine + 2 H(+) = thiamine phosphate + CO2 + diphosphate. The catalysed reaction is 2-(2-carboxy-4-methylthiazol-5-yl)ethyl phosphate + 4-amino-2-methyl-5-(diphosphooxymethyl)pyrimidine + 2 H(+) = thiamine phosphate + CO2 + diphosphate. It catalyses the reaction 4-methyl-5-(2-phosphooxyethyl)-thiazole + 4-amino-2-methyl-5-(diphosphooxymethyl)pyrimidine + H(+) = thiamine phosphate + diphosphate. The protein operates within cofactor biosynthesis; thiamine diphosphate biosynthesis; thiamine phosphate from 4-amino-2-methyl-5-diphosphomethylpyrimidine and 4-methyl-5-(2-phosphoethyl)-thiazole: step 1/1. Its function is as follows. Condenses 4-methyl-5-(beta-hydroxyethyl)thiazole monophosphate (THZ-P) and 2-methyl-4-amino-5-hydroxymethyl pyrimidine pyrophosphate (HMP-PP) to form thiamine monophosphate (TMP). The polypeptide is Thiamine-phosphate synthase (Escherichia coli O157:H7).